A 268-amino-acid chain; its full sequence is Small ribosomal subunit protein eS1 (268 aa).

Disordered stretches follow at residues 1–21 and 238–268; these read MAVG…KKKV and GGGK…QEAV.

This sequence belongs to the eukaryotic ribosomal protein eS1 family. Component of the small ribosomal subunit. Mature ribosomes consist of a small (40S) and a large (60S) subunit. The 40S subunit contains about 33 different proteins and 1 molecule of RNA (18S). The 60S subunit contains about 49 different proteins and 3 molecules of RNA (28S, 5.8S and 5S).

The protein resides in the cytoplasm. Functionally, essential for oogenesis; required for late follicle cell development. The sequence is that of Small ribosomal subunit protein eS1 from Drosophila ananassae (Fruit fly).